Consider the following 382-residue polypeptide: O-antigen polymerase (382 aa).

Topologically, residues 1-3 (MNN) are cytoplasmic. The helical transmembrane segment at 4–22 (INKIFITFLCIELIIGGGG) threads the bilayer. Residues 23-34 (RLLEPLGIFPLR) are Periplasmic-facing. The chain crosses the membrane as a helical span at residues 35-54 (YLLFVFSFILLIFNLVTFNF). Topologically, residues 55–62 (SITQKCVS) are cytoplasmic. A helical membrane pass occupies residues 63-81 (LFIWLLLFPFYGFFVGLLA). Over 82-94 (GNKINDILFDVQP) the chain is Periplasmic. A helical membrane pass occupies residues 95–112 (YLFMLSLIYLFTLRYTLK). The Cytoplasmic segment spans residues 113–125 (VFSCEIFIKIVNA). A helical membrane pass occupies residues 126–146 (FALYGSLLYISYIILLNFGLL). The Periplasmic portion of the chain corresponds to 147–167 (NFNLIYEHLSLTSEFFFRPDG). A helical transmembrane segment spans residues 168-187 (AFFSKSFYFFGVGAIISFVD). Topologically, residues 188–189 (KK) are cytoplasmic. The chain crosses the membrane as a helical span at residues 190 to 206 (YLKCLIIVLAILLTESR). At 207–208 (GV) the chain is on the periplasmic side. Residues 209 to 226 (LLFTTLSLLLASFKLHKL) traverse the membrane as a helical segment. The Cytoplasmic portion of the chain corresponds to 227–229 (YLN). A helical transmembrane segment spans residues 230–247 (TIIIILGSVLFIIMLYMV). Topologically, residues 248–300 (GSRSEDSDSVRFNDLYFYYKNVDLATFLFGRGFGSFILDRLRIEIVPLEILQK) are periplasmic. The helical transmembrane segment at 301 to 318 (TGVIGVFISLVPMLLIFL) threads the bilayer. The Cytoplasmic portion of the chain corresponds to 319–329 (KGYFLNSTKTS). The chain crosses the membrane as a helical span at residues 330–349 (LMMSLILFFSITVSITNPFL). At 350 to 352 (FTP) the chain is on the periplasmic side. A helical membrane pass occupies residues 353–370 (MGIFIIGVVVLWVFSIEN). Over 371–382 (IQISNNLTSGAK) the chain is Cytoplasmic.

Its subcellular location is the cell inner membrane. It catalyses the reaction n lipid-linked O-antigen repeat units = a lipid-linked O antigen + (n-1) polyisoprenyl diphosphate.. It functions in the pathway bacterial outer membrane biogenesis; LPS O-antigen biosynthesis. In terms of biological role, polymerase involved in the biosynthesis of the lipopolysaccharide (LPS). Catalyzes the polymerization of the O-antigen repeat units on the periplasmic face of the inner membrane, leading to the formation of the lipid-linked O-antigen molecule. The sequence is that of O-antigen polymerase from Shigella flexneri.